The primary structure comprises 39 residues: Photosystem II reaction center protein L (39 aa).

The helical transmembrane segment at 18-38 (SLYLGLLLVFVLGILFSSYFF) threads the bilayer.

It belongs to the PsbL family. In terms of assembly, PSII is composed of 1 copy each of membrane proteins PsbA, PsbB, PsbC, PsbD, PsbE, PsbF, PsbH, PsbI, PsbJ, PsbK, PsbL, PsbM, PsbT, PsbX, PsbY, PsbZ, Psb30/Ycf12, peripheral proteins PsbO, CyanoQ (PsbQ), PsbU, PsbV and a large number of cofactors. It forms dimeric complexes.

It is found in the cellular thylakoid membrane. Its function is as follows. One of the components of the core complex of photosystem II (PSII). PSII is a light-driven water:plastoquinone oxidoreductase that uses light energy to abstract electrons from H(2)O, generating O(2) and a proton gradient subsequently used for ATP formation. It consists of a core antenna complex that captures photons, and an electron transfer chain that converts photonic excitation into a charge separation. This subunit is found at the monomer-monomer interface and is required for correct PSII assembly and/or dimerization. This chain is Photosystem II reaction center protein L, found in Trichormus variabilis (strain ATCC 29413 / PCC 7937) (Anabaena variabilis).